The primary structure comprises 35 residues: Cytochrome b6-f complex subunit 7 (35 aa).

The chain crosses the membrane as a helical span at residues 9–27 (AGLSIVLTLVGVALGYGIL).

This sequence belongs to the PetM family. The 4 large subunits of the cytochrome b6-f complex are cytochrome b6, subunit IV (17 kDa polypeptide, PetD), cytochrome f and the Rieske protein, while the 4 small subunits are PetG, PetL, PetM and PetN. The complex functions as a dimer.

The protein localises to the cellular thylakoid membrane. Its function is as follows. Component of the cytochrome b6-f complex, which mediates electron transfer between photosystem II (PSII) and photosystem I (PSI), cyclic electron flow around PSI, and state transitions. This chain is Cytochrome b6-f complex subunit 7, found in Synechococcus sp. (strain JA-3-3Ab) (Cyanobacteria bacterium Yellowstone A-Prime).